The following is a 132-amino-acid chain: DNA-entry nuclease inhibitor (132 aa).

In terms of assembly, this protein is a subunit of a 75 kDa protein complex, which governs binding and entry of donor DNA. The complex is a tetramer of two subunits of the DNA-entry nuclease and two subunits of a competence-specific protein. Only the complex is able to bind ds- and ss-DNA.

Its subcellular location is the cell membrane. Its function is as follows. Plays a role in the competence of cells to be transformed. It inhibits the activity of the DNA-entry nuclease. The sequence is that of DNA-entry nuclease inhibitor (nin) from Bacillus subtilis (strain 168).